The following is a 355-amino-acid chain: DNA polymerase IV (355 aa).

Residues 7 to 188 (IIHIDMDCFY…LPVRKLFGVG (182 aa)) enclose the UmuC domain. The Mg(2+) site is built by Asp-11 and Asp-106. Glu-107 is an active-site residue.

The protein belongs to the DNA polymerase type-Y family. In terms of assembly, monomer. Mg(2+) is required as a cofactor.

It localises to the cytoplasm. The catalysed reaction is DNA(n) + a 2'-deoxyribonucleoside 5'-triphosphate = DNA(n+1) + diphosphate. Functionally, poorly processive, error-prone DNA polymerase involved in untargeted mutagenesis. Copies undamaged DNA at stalled replication forks, which arise in vivo from mismatched or misaligned primer ends. These misaligned primers can be extended by PolIV. Exhibits no 3'-5' exonuclease (proofreading) activity. May be involved in translesional synthesis, in conjunction with the beta clamp from PolIII. In Legionella pneumophila (strain Lens), this protein is DNA polymerase IV.